Consider the following 282-residue polypeptide: 2-dehydro-3-deoxyphosphooctonate aldolase (282 aa).

This sequence belongs to the KdsA family.

It localises to the cytoplasm. The enzyme catalyses D-arabinose 5-phosphate + phosphoenolpyruvate + H2O = 3-deoxy-alpha-D-manno-2-octulosonate-8-phosphate + phosphate. It participates in carbohydrate biosynthesis; 3-deoxy-D-manno-octulosonate biosynthesis; 3-deoxy-D-manno-octulosonate from D-ribulose 5-phosphate: step 2/3. Its pathway is bacterial outer membrane biogenesis; lipopolysaccharide biosynthesis. The sequence is that of 2-dehydro-3-deoxyphosphooctonate aldolase from Shewanella halifaxensis (strain HAW-EB4).